The chain runs to 101 residues: NADH-quinone oxidoreductase subunit K (101 aa).

3 consecutive transmembrane segments (helical) span residues 4-24 (LAHY…GIFL), 29-49 (IIII…NFVA), and 61-81 (IFVF…LAIL).

Belongs to the complex I subunit 4L family. As to quaternary structure, NDH-1 is composed of 14 different subunits. Subunits NuoA, H, J, K, L, M, N constitute the membrane sector of the complex.

It localises to the cell inner membrane. The catalysed reaction is a quinone + NADH + 5 H(+)(in) = a quinol + NAD(+) + 4 H(+)(out). Functionally, NDH-1 shuttles electrons from NADH, via FMN and iron-sulfur (Fe-S) centers, to quinones in the respiratory chain. The immediate electron acceptor for the enzyme in this species is believed to be ubiquinone. Couples the redox reaction to proton translocation (for every two electrons transferred, four hydrogen ions are translocated across the cytoplasmic membrane), and thus conserves the redox energy in a proton gradient. This is NADH-quinone oxidoreductase subunit K from Burkholderia ambifaria (strain MC40-6).